Reading from the N-terminus, the 250-residue chain is Isoprenyl transferase (250 aa).

Aspartate 27 is an active-site residue. A Mg(2+)-binding site is contributed by aspartate 27. Residues 28-31, tryptophan 32, histidine 48, and 76-78 contribute to the substrate site; these read GNRR and STE. Asparagine 79 serves as the catalytic Proton acceptor. Substrate contacts are provided by residues phenylalanine 80, arginine 82, arginine 199, and 205 to 207; that span reads RVS. Glutamate 218 serves as a coordination point for Mg(2+).

The protein belongs to the UPP synthase family. Homodimer. Mg(2+) is required as a cofactor.

Its function is as follows. Catalyzes the condensation of isopentenyl diphosphate (IPP) with allylic pyrophosphates generating different type of terpenoids. This is Isoprenyl transferase from Chlamydia pneumoniae (Chlamydophila pneumoniae).